The chain runs to 602 residues: Arp2/3 complex-activating protein rickA (602 aa).

Disordered regions lie at residues 307–484 (SSLA…AGPK), 516–535 (VEFDPNTGKPVAHSHSKPVQ), and 555–602 (MSDS…SFVK). Residues 318–442 (TPPPPLPGNN…IPPPPPPPMA (125 aa)) show a composition bias toward pro residues. WH2 domains lie at 472-489 (DTSDLMREIAGPKKLRKV) and 499-516 (SRDLLLQSIRGEHKLKKV). Residues 475–484 (DLMREIAGPK) show a composition bias toward basic and acidic residues. The interval 537 to 570 (VNKLSGVASILARRVVMEMSDSSGSESDSGNWSD) is central and acidic domains. The segment covering 555-566 (MSDSSGSESDSG) has biased composition (low complexity). The span at 578-590 (KTLKTKRERRKIL) shows a compositional bias: basic residues. Positions 591–602 (NNRNSQKPSFVK) are enriched in polar residues.

In terms of assembly, homodimer.

It localises to the cell surface. Functionally, recruits and activates the Arp2/3 complex, which in turn leads to actin polymerization, promoting Rickettsia motility during infection. The polypeptide is Arp2/3 complex-activating protein rickA (rickA) (Rickettsia montanensis).